Here is a 1182-residue protein sequence, read N- to C-terminus: Rho GTPase-activating protein 20 (1182 aa).

Positions 1 to 40 are disordered; sequence MEAMSPQQDALGAQPGRSSSLTGMSRIAGGPGTKKKMKTL. Serine 46 is modified (phosphoserine). The PH domain occupies 85–185; the sequence is TLLIDGPVEL…WLSLLQRYIA (101 aa). Residues 194–283 form the Ras-associating domain; sequence KSIPLKIFAK…TALLTQGSRD (90 aa). Positions 365–551 constitute a Rho-GAP domain; it reads VSLPDLCEND…FLIENCCRVF (187 aa). A phosphoserine mark is found at serine 704 and serine 730. 6 disordered regions span residues 745–772, 803–839, 935–955, 982–1011, 1074–1101, and 1142–1182; these read QTQPQKKGDKVCLKQSSVTGTDVSKRNT, VASYSHGSSQDHPRKQAFDADPCRFSPPHLTDAQKSS, SYSSLSSPGSSPSGSSVSSQD, TQRKQEELSSDFDSPSRLSGMPGPSMGQAS, LPSCASGTPEADSLQESQDDLQGDEGPG, and SGGQ…GTDI. Residues 758-772 show a composition bias toward polar residues; that stretch reads KQSSVTGTDVSKRNT. Residues 811–824 show a composition bias toward basic and acidic residues; that stretch reads SQDHPRKQAFDADP.

Functionally, GTPase activator for the Rho-type GTPases by converting them to an inactive GDP-bound state. The sequence is that of Rho GTPase-activating protein 20 (Arhgap20) from Mus musculus (Mouse).